The following is a 229-amino-acid chain: Sorting nexin-10A (229 aa).

One can recognise a PX domain in the interval 11–128 (FISVWVRDPQ…HLFLQSQLSI (118 aa)). A 1,2-diacyl-sn-glycero-3-phospho-(1D-myo-inositol-3-phosphate)-binding residues include Arg54 and Arg95.

This sequence belongs to the sorting nexin family.

The protein localises to the cytoplasm. Its subcellular location is the endosome membrane. It is found in the cytoskeleton. It localises to the microtubule organizing center. The protein resides in the centrosome. Functionally, probable phosphoinositide-binding protein involved in protein sorting and membrane trafficking in endosomes. May play a role in cilium biogenesis through regulation of the transport and the localization of proteins to the cilium. The protein is Sorting nexin-10A (snx10a) of Danio rerio (Zebrafish).